The primary structure comprises 400 residues: PHD finger protein 24 (400 aa).

Residue Gly2 is the site of N-myristoyl glycine attachment. The tract at residues Asp30–Thr108 is disordered. The residue at position 36 (Arg36) is an Omega-N-methylarginine. A Phosphoserine modification is found at Ser43. Phosphothreonine is present on Thr47. Residue Ser51 is modified to Phosphoserine. Basic and acidic residues predominate over residues Ala78–Gly97. Residues Asn129–Asn190 form a PHD-type zinc finger.

This chain is PHD finger protein 24, found in Pongo abelii (Sumatran orangutan).